The sequence spans 256 residues: 2,3,4,5-tetrahydropyridine-2,6-dicarboxylate N-acetyltransferase (256 aa).

It belongs to the transferase hexapeptide repeat family. DapH subfamily.

The enzyme catalyses (S)-2,3,4,5-tetrahydrodipicolinate + acetyl-CoA + H2O = L-2-acetamido-6-oxoheptanedioate + CoA. Its pathway is amino-acid biosynthesis; L-lysine biosynthesis via DAP pathway; LL-2,6-diaminopimelate from (S)-tetrahydrodipicolinate (acetylase route): step 1/3. Its function is as follows. Catalyzes the transfer of an acetyl group from acetyl-CoA to tetrahydrodipicolinate. The sequence is that of 2,3,4,5-tetrahydropyridine-2,6-dicarboxylate N-acetyltransferase from Lactococcus lactis subsp. lactis (strain IL1403) (Streptococcus lactis).